The chain runs to 216 residues: Co-chaperone protein SBA1 (216 aa).

Serine 2 is subject to N-acetylserine. Positions 5 to 108 constitute a CS domain; that stretch reads VINPQVAWAQ…LESEYWPRLT (104 aa). 2 repeats span residues 141–156 and 160–174; these read AQGM…AGGA and GGMD…AGGA. A disordered region spans residues 169–216; the sequence is GGAGGAGSPDMAQLQQLLAQSGGNLDMGDFKENDEEDEEEEIEPEVKA. The segment covering 200–216 has biased composition (acidic residues); it reads ENDEEDEEEEIEPEVKA.

This sequence belongs to the p23/wos2 family. Interacts with HSP82.

Functionally, acts as a co-chaperone. The polypeptide is Co-chaperone protein SBA1 (SBA1) (Saccharomyces cerevisiae (strain ATCC 204508 / S288c) (Baker's yeast)).